A 25-amino-acid chain; its full sequence is Metallothionein (25 aa).

Cu(+)-binding residues include C3, C5, C11, C13, C18, C20, and C23.

Belongs to the metallothionein superfamily. Type 8 family.

Its function is as follows. The metallothioneins are involved in the cellular sequestration of toxic metal ions. Binds six copper (cuprous) ions. The chain is Metallothionein from Agaricus bisporus (White button mushroom).